A 348-amino-acid chain; its full sequence is DnaJ homolog subfamily B member 5 (348 aa).

Residues 4–68 (DYYKILGIPS…KKRGLYDQYG (65 aa)) enclose the J domain.

The chain is DnaJ homolog subfamily B member 5 (DNAJB5) from Homo sapiens (Human).